A 201-amino-acid chain; its full sequence is FMN-dependent NADH:quinone oxidoreductase (201 aa).

FMN-binding positions include Ser9 and 16 to 18 (SYS).

It belongs to the azoreductase type 1 family. In terms of assembly, homodimer. Requires FMN as cofactor.

It catalyses the reaction 2 a quinone + NADH + H(+) = 2 a 1,4-benzosemiquinone + NAD(+). It carries out the reaction N,N-dimethyl-1,4-phenylenediamine + anthranilate + 2 NAD(+) = 2-(4-dimethylaminophenyl)diazenylbenzoate + 2 NADH + 2 H(+). Functionally, quinone reductase that provides resistance to thiol-specific stress caused by electrophilic quinones. Its function is as follows. Also exhibits azoreductase activity. Catalyzes the reductive cleavage of the azo bond in aromatic azo compounds to the corresponding amines. This is FMN-dependent NADH:quinone oxidoreductase from Mesomycoplasma hyopneumoniae (strain 232) (Mycoplasma hyopneumoniae).